Consider the following 340-residue polypeptide: Cyclic GMP-AMP synthase-like receptor 3 (340 aa).

ATP is bound by residues S62 and 74–76 (EAD). Positions 74, 76, and 177 each coordinate Mg(2+). Residues K241 and 255–259 (SYHLK) each bind ATP. 2 residues coordinate Mn(2+): D267 and D270.

Belongs to the mab-21 family. It depends on Mg(2+) as a cofactor. Mn(2+) is required as a cofactor.

The catalysed reaction is 2 ATP = 3',3'-c-di-AMP + 2 diphosphate. Its function is as follows. Nucleotidyltransferase that catalyzes the formation of cyclic di-AMP (3',3'-c-di-AMP) from 2 molecules of ATP and plays a key role in innate immunity. Acts as a key sensor of double-stranded RNA (dsRNA), the presence of dsRNA in the cytoplasm being a danger signal that triggers the immune responses. Directly binds dsRNA, activating the nucleotidyltransferase activity, leading to synthesis of 3',3'-c-di-AMP, a second messenger that binds to and activates Sting, thereby triggering the immune response via activation of the NF-kappa-B transcription factor. This is Cyclic GMP-AMP synthase-like receptor 3 from Stylophora pistillata (Smooth cauliflower coral).